Reading from the N-terminus, the 346-residue chain is Phosphate acyltransferase (346 aa).

The protein belongs to the PlsX family. As to quaternary structure, homodimer. Probably interacts with PlsY.

The protein localises to the cytoplasm. It catalyses the reaction a fatty acyl-[ACP] + phosphate = an acyl phosphate + holo-[ACP]. The protein operates within lipid metabolism; phospholipid metabolism. In terms of biological role, catalyzes the reversible formation of acyl-phosphate (acyl-PO(4)) from acyl-[acyl-carrier-protein] (acyl-ACP). This enzyme utilizes acyl-ACP as fatty acyl donor, but not acyl-CoA. In Geotalea daltonii (strain DSM 22248 / JCM 15807 / FRC-32) (Geobacter daltonii), this protein is Phosphate acyltransferase.